Here is a 2261-residue protein sequence, read N- to C-terminus: Phospholipid-transporting ATPase ABCA1 (2261 aa).

Cysteine 3 carries the S-palmitoyl cysteine lipid modification. Asparagine 14 carries an N-linked (GlcNAc...) asparagine glycan. The helical transmembrane segment at 22–42 threads the bilayer; sequence TCQLLLEVAWPLFIFLILISV. Residue cysteine 23 is the site of S-palmitoyl cysteine attachment. Over 43 to 639 the chain is Extracellular; the sequence is RLSYPPYEQH…DIFLRVMSRS (597 aa). Positions 69 to 80 are annulus domain 1; it reads WVQGIICNANNP. Cysteines 75 and 309 form a disulfide. N-linked (GlcNAc...) asparagine glycosylation is found at asparagine 98, asparagine 151, asparagine 161, asparagine 196, asparagine 244, asparagine 292, asparagine 337, and asparagine 349. The annulus domain 2 stretch occupies residues 368-379; sequence SRIIWKALKPLL. 4 N-linked (GlcNAc...) asparagine glycosylation sites follow: asparagine 400, asparagine 478, asparagine 489, and asparagine 521. The interval 564–594 is gateway domain; sequence ERTNKIKDGYWDPGPRADPFEDMRYVWGGFA. 5 helical membrane-spanning segments follow: residues 640-660, 683-703, 716-736, 745-765, and 777-797; these read MPLFMTLAWIYSVAVIIKGIV, FSWFISSLIPLLVSAGLLVVI, SVVFVFLSVFAVVTILQCFLI, LAAACGGIIYFTLYLPYVLCV, and IFASLLSPVAFGFGCEYFALF. N-linked (GlcNAc...) asparagine glycosylation occurs at asparagine 820. The helical transmembrane segment at 827 to 847 threads the bilayer; that stretch reads MMLFDTFLYGVMTWYIEAVFP. The ABC transporter 1 domain occupies 899-1131; sequence VSIQNLVKVY…LGTGYYLTLV (233 aa). Residue 933–940 participates in ATP binding; the sequence is GHNGAGKT. A helical transmembrane segment spans residues 1041 to 1057; the sequence is LSVALAFVGGSKVVILD. Residue serine 1042 is modified to Phosphoserine; by PKA. 2 S-palmitoyl cysteine lipidation sites follow: cysteine 1110 and cysteine 1111. Residues asparagine 1144 and asparagine 1294 are each glycosylated (N-linked (GlcNAc...) asparagine). Positions 1283–1312 are disordered; the sequence is RPFTEDDAADPNDSDIDPESRETDLLSGMD. The span at 1287–1299 shows a compositional bias: acidic residues; sequence EDDAADPNDSDID. At serine 1296 the chain carries Phosphoserine. A helical membrane pass occupies residues 1351–1371; sequence IVLPAVFVCIALVFSLIVPPF. Residues 1372 to 1656 lie on the Extracellular side of the membrane; the sequence is GKYPSLELQP…ALMTTSVDVL (285 aa). Asparagine 1453 is a glycosylation site (N-linked (GlcNAc...) asparagine). An intrachain disulfide couples cysteine 1463 to cysteine 1477. 2 N-linked (GlcNAc...) asparagine glycosylation sites follow: asparagine 1504 and asparagine 1637. The next 6 membrane-spanning stretches (helical) occupy residues 1657 to 1677, 1703 to 1723, 1735 to 1755, 1768 to 1788, 1802 to 1822, and 1852 to 1872; these read VSICVIFAMSFVPASFVVFLI, FVWDMCNYVVPATLVIIIFIC, LPVLALLLLLYGWSITPLMYP, VVLTSVNLFIGINGSVATFVL, ILKSVFLIFPHFCLGRGLIDM, and NLFAMAVEGVVFFLITVLIQY. Positions 1912-2144 constitute an ABC transporter 2 domain; the sequence is LEIKELTKIY…FGDGYTIVVR (233 aa). Residue 1946 to 1953 participates in ATP binding; the sequence is GVNGAGKS. Asparagine 2044 carries N-linked (GlcNAc...) asparagine glycosylation. Serine 2054 is subject to Phosphoserine; by PKA. An N-linked (GlcNAc...) asparagine glycan is attached at asparagine 2238.

Belongs to the ABC transporter superfamily. ABCA family. In terms of assembly, interacts with MEGF10. May interact with APOE1; functionally associated with APOE1 in the biogenesis of HDLs. Interacts with ABCA8; this interaction potentiates cholesterol efflux. Interacts with ABCA12 and NR1H2; this interaction is required for ABCA1 localization to the cell surface and is necessary for its normal activity and stability. Post-translationally, phosphorylation on Ser-2054 regulates phospholipid efflux. Palmitoylated by ZDHHC8. Palmitoylation is essential for localization to the plasma membrane. Widely expressed, but most abundant in macrophages.

Its subcellular location is the cell membrane. The protein localises to the endosome. The catalysed reaction is ATP + H2O + phospholipidSide 1 = ADP + phosphate + phospholipidSide 2.. It carries out the reaction a 1,2-diacyl-sn-glycero-3-phosphocholine(out) + ATP + H2O = a 1,2-diacyl-sn-glycero-3-phosphocholine(in) + ADP + phosphate + H(+). The enzyme catalyses a 1,2-diacyl-sn-glycero-3-phospho-L-serine(out) + ATP + H2O = a 1,2-diacyl-sn-glycero-3-phospho-L-serine(in) + ADP + phosphate + H(+). It catalyses the reaction a sphingomyelin(in) + ATP + H2O = a sphingomyelin(out) + ADP + phosphate + H(+). The catalysed reaction is cholesterol(in) + ATP + H2O = cholesterol(out) + ADP + phosphate + H(+). ATPase activity is decreased by cholesterol and ceramide. ATPase activity is stimulated by phosphatidylcholine and to a lesser degree by phosphatidylserine and sphingomyelin. Phospholipid translocase activity is highly reduced by berylium fluoride and aluminum flouride and reduced by N-ethylmaleimide. Functionally, catalyzes the translocation of specific phospholipids from the cytoplasmic to the extracellular/lumenal leaflet of membrane coupled to the hydrolysis of ATP. Thereby, participates in phospholipid transfer to apolipoproteins to form nascent high density lipoproteins/HDLs. Transports preferentially phosphatidylcholine over phosphatidylserine. May play a similar role in the efflux of intracellular cholesterol to apolipoproteins and the formation of nascent high density lipoproteins/HDLs. Translocates phospholipids from the outer face of the plasma membrane and forces it through its gateway and annulus into an elongated hydrophobic tunnel in its extracellular domain. The chain is Phospholipid-transporting ATPase ABCA1 from Homo sapiens (Human).